The following is a 216-amino-acid chain: Probable nicotinate-nucleotide adenylyltransferase (216 aa).

The protein belongs to the NadD family.

It carries out the reaction nicotinate beta-D-ribonucleotide + ATP + H(+) = deamido-NAD(+) + diphosphate. It functions in the pathway cofactor biosynthesis; NAD(+) biosynthesis; deamido-NAD(+) from nicotinate D-ribonucleotide: step 1/1. Functionally, catalyzes the reversible adenylation of nicotinate mononucleotide (NaMN) to nicotinic acid adenine dinucleotide (NaAD). The protein is Probable nicotinate-nucleotide adenylyltransferase of Maridesulfovibrio salexigens (strain ATCC 14822 / DSM 2638 / NCIMB 8403 / VKM B-1763) (Desulfovibrio salexigens).